A 703-amino-acid chain; its full sequence is Centrosomal protein of 63 kDa (703 aa).

The residue at position 1 (Met-1) is an N-acetylmethionine. 4 coiled-coil regions span residues 22–199 (EAEL…ESVE), 242–306 (MTVL…QHAV), 353–533 (LEGS…STQM), and 676–703 (HILE…TALK). At Ser-278 the chain carries Phosphoserine.

The protein belongs to the CEP63 family. As to quaternary structure, interacts with CEP152 and CDK1; these interactions recruit both ligands to centrosomes. Interacts with CDK2, CDK5RAP2, WDR62, CEP90, KIAA0753/moonraker and CCDC14. CEP63, CDK5RAP2, CEP152, WDR62 are proposed to form a stepwise assembled complex at the centrosome forming a ring near parental centrioles. Interacts with CCDC57; the interaction is required for their location to proximal end of centrioles. Interacts with FXR1; promoting its stabilization. (Microbial infection) Interacts with zika virus serine protease NS3; this interaction disorganizes the centrosome. Polyubiquitinated via 'Lys-48'-linked ubiquitin, leading to its degradation. Deubiquitinated by USP36, promoting its stabilization.

It is found in the cytoplasm. The protein resides in the cytoskeleton. It localises to the microtubule organizing center. Its subcellular location is the centrosome. The protein localises to the centriole. It is found in the centriolar satellite. In terms of biological role, required for normal spindle assembly. Plays a key role in mother-centriole-dependent centriole duplication; the function seems also to involve CEP152, CDK5RAP2 and WDR62 through a stepwise assembled complex at the centrosome that recruits CDK2 required for centriole duplication. Reported to be required for centrosomal recruitment of CEP152; however, this function has been questioned. Also recruits CDK1 to centrosomes. Plays a role in DNA damage response. Following DNA damage, such as double-strand breaks (DSBs), is removed from centrosomes; this leads to the inactivation of spindle assembly and delay in mitotic progression. Promotes stabilization of FXR1 protein by inhibiting FXR1 ubiquitination. In Homo sapiens (Human), this protein is Centrosomal protein of 63 kDa.